The sequence spans 144 residues: Large ribosomal subunit protein uL15 (144 aa).

Residues 1-14 are compositionally biased toward basic residues; it reads MVVRREKKSRKMRG. The segment at 1–35 is disordered; it reads MVVRREKKSRKMRGSRTMGWGIRGQHRDRGSQGGR.

Belongs to the universal ribosomal protein uL15 family. In terms of assembly, part of the 50S ribosomal subunit.

Functionally, binds to the 23S rRNA. In Saccharolobus solfataricus (strain ATCC 35092 / DSM 1617 / JCM 11322 / P2) (Sulfolobus solfataricus), this protein is Large ribosomal subunit protein uL15.